We begin with the raw amino-acid sequence, 423 residues long: MVNHIRIFDNLFQSNISKFQNLTSKSYIIRNDNEKNSYLPMVQEIRELFGKEGEIFSKSIGTHPDFFGIENTNEYQYICSLFVDISGSTKLALKYSLDKVKLYKNAIISSAIEIFRAFDGHIHRIQGDAVLVYFGHKELEKSDAIINAINAASLMQYFNATTLKKFFESENLEPLKIRIGIDFGDDSSVLWSKYGIDGINEITSTSIHTDLASKFQNKAPSNKIMIGENINKYLDIPKKFRSIKIEKNNGVDVEKRYILNTNNLGRYSMEVFEWEKYLNSFSMLPPFSTENEQFYSPRDLKIRCWIIDEKNQDKYEYIERGSALKKEMNLLFKLEIYNQCLEFKNIKWRVVNYGEEAKKDKELEFEMNQYEGYQYCNQKTAYTGLHFMECYLYDINDKIICHDSFGLFINDNNREVRKLGIED.

Residues 79-184 (CSLFVDISGS…LKIRIGIDFG (106 aa)) form the Guanylate cyclase domain. F82 lines the a ribonucleoside 5'-triphosphate pocket. The Mn(2+) site is built by D84, I85, and D128. The tract at residues 290 to 409 (ENEQFYSPRD…ICHDSFGLFI (120 aa)) is AGS-C domain.

The protein belongs to the adenylyl cyclase class-4/guanylyl cyclase family. Pyrimidine cyclase subfamily. As to quaternary structure, homodimer. Requires Mn(2+) as cofactor.

It localises to the cytoplasm. The catalysed reaction is CTP = 3',5'-cyclic CMP + diphosphate. Pycsar (pyrimidine cyclase system for antiphage resistance) provides immunity against bacteriophage. The pyrimidine cyclase (PycC) synthesizes cyclic nucleotides in response to infection; these serve as specific second messenger signals. The signal activates the adjacent effector, leading to bacterial cell death and abortive phage infection. A clade E Pycsar system. Its function is as follows. The pyrimidine cyclase gene of a two-gene Pycsar system, weakly generates cyclic CMP (cCMP) from CTP, has little to no activity on ATP, GTP or UTP. Expression of this and adjacent effector SaPycTM (AC P0DV39) probably confers resistance to bacteriophage. The genes are probably only expressed in response to bacteriophage infection. This is Cytidylate cyclase from Staphylococcus aureus.